Here is a 73-residue protein sequence, read N- to C-terminus: Alpha-bungarotoxin N3 (73 aa).

Intrachain disulfides connect Cys3–Cys23, Cys16–Cys43, Cys28–Cys32, Cys47–Cys58, and Cys59–Cys64.

This sequence belongs to the three-finger toxin family. Long-chain subfamily. Type II alpha-neurotoxin sub-subfamily. In terms of assembly, monomer in solution, homodimer in crystal state. Expressed by the venom gland.

The protein resides in the secreted. Its function is as follows. Binds with high affinity to muscular (alpha-1/CHRNA1) and neuronal (alpha-7/CHRNA7) nicotinic acetylcholine receptor (nAChR) and inhibits acetylcholine from binding to the receptor, thereby impairing neuromuscular and neuronal transmission. Mice injected with this toxin develop flaccid paralysis followed by death. Irreversibly inhibits twitches in a concentration-dependent manner in rat phrenic nerve-hemidiaphragm and chick biventer cervicis muscle. This is Alpha-bungarotoxin N3 from Bungarus candidus (Malayan krait).